We begin with the raw amino-acid sequence, 56 residues long: Large ribosomal subunit protein bL32 (56 aa).

Residues Met1–Arg16 show a composition bias toward basic residues. The tract at residues Met1–Ala21 is disordered.

This sequence belongs to the bacterial ribosomal protein bL32 family.

The polypeptide is Large ribosomal subunit protein bL32 (Vibrio atlanticus (strain LGP32) (Vibrio splendidus (strain Mel32))).